The following is a 954-amino-acid chain: Calsyntenin-1 (954 aa).

The N-terminal stretch at 1 to 25 (MRIRGVKPFASAVGLLLGLLYAVDA) is a signal peptide. Residues 26–833 (AKVNKHKPWI…THQASVVPSA (808 aa)) lie on the Extracellular side of the membrane. Cadherin domains are found at residues 35-151 (IETT…SPVF) and 152-252 (KEKS…KPSW). Residues asparagine 333, asparagine 353, and asparagine 552 are each glycosylated (N-linked (GlcNAc...) asparagine). A helical transmembrane segment spans residues 834 to 854 (ATIVIVVCVSFLVFMIILGVF). The Cytoplasmic portion of the chain corresponds to 855–954 (RIRAAHQRTM…LEWDDSTLTY (100 aa)). The disordered stretch occupies residues 891–954 (TYEDQHSSEE…LEWDDSTLTY (64 aa)). The segment covering 900–935 (EEGDEEEEESEDGEEEDDITSAESDSSEDEAGEQED) has biased composition (acidic residues).

Belongs to the calsyntenin family. Homooligomer and heterooligomer; mediates both homophilic and heterophilc interactions with clstn2 and clstn3 paralogs via cadherin domains. By 48 hours post-fertilization (hpf), widely expressed in the brain, with strong expression in the telencephalon and the midbrain.

The protein localises to the postsynaptic cell membrane. It is found in the endoplasmic reticulum membrane. The protein resides in the golgi apparatus membrane. It localises to the cell projection. Its subcellular location is the neuron projection. Functionally, postsynaptic adhesion molecule involved in vesicle trafficking; required for branching of peripheral but not central axons of sensory neurons. Promotes synapse development by acting as a cell adhesion molecule at the postsynaptic membrane, which associates with presynaptic neurexins. This chain is Calsyntenin-1, found in Danio rerio (Zebrafish).